The following is a 228-amino-acid chain: Ornithine decarboxylase antizyme 1 (228 aa).

The interval 17-55 (REKEGDKPSATIHASRTMPLLSLHSRGGSSSESSRVSLH) is disordered. The span at 36–55 (LLSLHSRGGSSSESSRVSLH) shows a compositional bias: low complexity.

It belongs to the ODC antizyme family. Interacts with ODC1 and thereby sterically blocks ODC homodimerization. Forms a ternary complex with PSMB4 and OAZ1 before PSMB4 is incorporated into the 20S proteasome. Interacts with AZIN2; this interaction disrupts the interaction between the antizyme and ODC1. Interacts with FAM171A1.

Its function is as follows. Ornithine decarboxylase (ODC) antizyme protein that negatively regulates ODC activity and intracellular polyamine biosynthesis and uptake in response to increased intracellular polyamine levels. Binds to ODC monomers, inhibiting the assembly of the functional ODC homodimer, and targets the monomers for ubiquitin-independent proteolytic destruction by the 26S proteasome. Triggers ODC degradation by inducing the exposure of a cryptic proteasome-interacting surface of ODC. Stabilizes AZIN2 by interfering with its ubiquitination. Also inhibits cellular uptake of polyamines by inactivating the polyamine uptake transporter. SMAD1/OAZ1/PSMB4 complex mediates the degradation of the CREBBP/EP300 repressor SNIP1. Involved in the translocation of AZIN2 from ER-Golgi intermediate compartment (ERGIC) to the cytosol. The sequence is that of Ornithine decarboxylase antizyme 1 (OAZ1) from Homo sapiens (Human).